Consider the following 260-residue polypeptide: Adenosylcobinamide-GDP ribazoletransferase (260 aa).

A run of 7 helical transmembrane segments spans residues 42 to 62 (PLAGGILGLLAGVALLIANAI), 64 to 84 (LPPLAAALIAIGALAAMTGAL), 117 to 137 (FAALTLVIWTGVKASLLMAII), 144 to 164 (YALLALIGTEAASRAGMLAFW), 192 to 212 (GLGLALLAIGFLPSGGMVALI), 214 to 234 (ALVLMTVVLFGFARLCMAKIG), and 240 to 260 (TLGAAQQIGSLAALIGLVMAL).

The protein belongs to the CobS family. Mg(2+) is required as a cofactor.

Its subcellular location is the cell inner membrane. It catalyses the reaction alpha-ribazole + adenosylcob(III)inamide-GDP = adenosylcob(III)alamin + GMP + H(+). The catalysed reaction is alpha-ribazole 5'-phosphate + adenosylcob(III)inamide-GDP = adenosylcob(III)alamin 5'-phosphate + GMP + H(+). It participates in cofactor biosynthesis; adenosylcobalamin biosynthesis; adenosylcobalamin from cob(II)yrinate a,c-diamide: step 7/7. Functionally, joins adenosylcobinamide-GDP and alpha-ribazole to generate adenosylcobalamin (Ado-cobalamin). Also synthesizes adenosylcobalamin 5'-phosphate from adenosylcobinamide-GDP and alpha-ribazole 5'-phosphate. In Brucella melitensis biotype 1 (strain ATCC 23456 / CCUG 17765 / NCTC 10094 / 16M), this protein is Adenosylcobinamide-GDP ribazoletransferase.